The chain runs to 437 residues: tRNA-2-methylthio-N(6)-dimethylallyladenosine synthase (437 aa).

Residues 1–117 (MKFYIKTFGC…LPNLLEEAKS (117 aa)) enclose the MTTase N-terminal domain. Residues C10, C46, C80, C156, C160, and C163 each contribute to the [4Fe-4S] cluster site. Positions 142–371 (RENKYTAFVT…INLQKDITFK (230 aa)) constitute a Radical SAM core domain. The TRAM domain occupies 374 to 435 (LEYQDKIVEI…RFSLEGSIIG (62 aa)).

It belongs to the methylthiotransferase family. MiaB subfamily. As to quaternary structure, monomer. [4Fe-4S] cluster serves as cofactor.

It is found in the cytoplasm. It carries out the reaction N(6)-dimethylallyladenosine(37) in tRNA + (sulfur carrier)-SH + AH2 + 2 S-adenosyl-L-methionine = 2-methylsulfanyl-N(6)-dimethylallyladenosine(37) in tRNA + (sulfur carrier)-H + 5'-deoxyadenosine + L-methionine + A + S-adenosyl-L-homocysteine + 2 H(+). Catalyzes the methylthiolation of N6-(dimethylallyl)adenosine (i(6)A), leading to the formation of 2-methylthio-N6-(dimethylallyl)adenosine (ms(2)i(6)A) at position 37 in tRNAs that read codons beginning with uridine. The chain is tRNA-2-methylthio-N(6)-dimethylallyladenosine synthase from Sulfurihydrogenibium sp. (strain YO3AOP1).